A 261-amino-acid chain; its full sequence is MIETYNQPSPRSAATGLPVRMKIFMYLLTIFLITQMIGSALFAVYLHRRLDKIEDERNLHEDFVFMKTIQRCNTGERSLSLLNCEEIKSQFEGFVKDIMLNKEEKKKENSFEMQKGDQNPQIAAHVISEASSKTTSVLQWAEKGYYTMSNNLVTLENGKQLTVKRQGLYYIYAQVTFCSNREASSQAPFIASLCLKSPGRFERILLRAANTHSSAKPCGQQSIHLGGVFELQPGASVFVNVTDPSQVSHGTGFTSFGLLKL.

The Cytoplasmic segment spans residues 1-22 (MIETYNQPSPRSAATGLPVRMK). Residues 23 to 43 (IFMYLLTIFLITQMIGSALFA) traverse the membrane as a helical; Signal-anchor for type II membrane protein segment. Residues 44 to 261 (VYLHRRLDKI…GFTSFGLLKL (218 aa)) are Extracellular-facing. The THD domain occupies 122–261 (IAAHVISEAS…GFTSFGLLKL (140 aa)). Cys178 and Cys218 form a disulfide bridge. N-linked (GlcNAc...) asparagine glycosylation is present at Asn240.

Belongs to the tumor necrosis factor family. Homotrimer. Interacts with CD28. CD40 ligand, soluble form: Exists as either a monomer or a homotrimer. Forms a ternary complex between CD40 and integrins for CD40-CD40LG signaling. In terms of processing, the soluble form derives from the membrane form by proteolytic processing.

It localises to the cell membrane. It is found in the cell surface. The protein resides in the secreted. Functionally, cytokine that acts as a ligand to CD40/TNFRSF5. Costimulates T-cell proliferation and cytokine production. Its cross-linking on T-cells generates a costimulatory signal which enhances the production of IL4 and IL10 in conjunction with the TCR/CD3 ligation and CD28 costimulation. Induces the activation of NF-kappa-B. Induces the activation of kinases MAPK8 and PAK2 in T-cells. Mediates B-cell proliferation in the absence of co-stimulus as well as IgE production in the presence of IL4. Involved in immunoglobulin class switching. Acts as a ligand for integrins, specifically ITGA5:ITGB1 and ITGAV:ITGB3; both integrins and the CD40 receptor are required for activation of CD40-CD40LG signaling, which have cell-type dependent effects, such as B-cell activation, NF-kappa-B signaling and anti-apoptotic signaling. In Cercocebus atys (Sooty mangabey), this protein is CD40 ligand (CD40LG).